The sequence spans 1050 residues: Sucrose-phosphate synthase 4 (1050 aa).

Positions 134–167 (QGRNDAEEDLLSELSEGEKDKNDGEKEKSEVVTT) are disordered. Ser148 carries the post-translational modification Phosphoserine. Positions 149–163 (EGEKDKNDGEKEKSE) are enriched in basic and acidic residues. The residue at position 180 (Ser180) is a Phosphoserine.

The protein belongs to the glycosyltransferase 1 family. As to quaternary structure, homodimer or homotetramer.

It catalyses the reaction beta-D-fructose 6-phosphate + UDP-alpha-D-glucose = sucrose 6(F)-phosphate + UDP + H(+). The protein operates within glycan biosynthesis; sucrose biosynthesis; sucrose from D-fructose 6-phosphate and UDP-alpha-D-glucose: step 1/2. With respect to regulation, activity is regulated by phosphorylation and moderated by concentration of metabolites and light. Functionally, plays a role in photosynthetic sucrose synthesis by catalyzing the rate-limiting step of sucrose biosynthesis from UDP-glucose and fructose- 6-phosphate. Involved in the regulation of carbon partitioning in the leaves of plants. May regulate the synthesis of sucrose and therefore play a major role as a limiting factor in the export of photoassimilates out of the leaf. Plays a role for sucrose availability that is essential for plant growth and fiber elongation. This chain is Sucrose-phosphate synthase 4, found in Arabidopsis thaliana (Mouse-ear cress).